The chain runs to 20 residues: Putative phosphoglycerate kinase (20 aa).

The protein belongs to the phosphoglycerate kinase family. In terms of assembly, monomer.

The protein localises to the cytoplasm. It carries out the reaction (2R)-3-phosphoglycerate + ATP = (2R)-3-phospho-glyceroyl phosphate + ADP. It participates in carbohydrate degradation; glycolysis; pyruvate from D-glyceraldehyde 3-phosphate: step 2/5. The polypeptide is Putative phosphoglycerate kinase (pgk) (Clostridium pasteurianum).